Consider the following 158-residue polypeptide: 6,7-dimethyl-8-ribityllumazine synthase (158 aa).

5-amino-6-(D-ribitylamino)uracil contacts are provided by residues Phe23, 61–63 (SFE), and 85–87 (AVI). 90–91 (DT) lines the (2S)-2-hydroxy-3-oxobutyl phosphate pocket. The Proton donor role is filled by His93. 5-amino-6-(D-ribitylamino)uracil is bound at residue Phe118. (2S)-2-hydroxy-3-oxobutyl phosphate is bound at residue Arg132.

It belongs to the DMRL synthase family.

It catalyses the reaction (2S)-2-hydroxy-3-oxobutyl phosphate + 5-amino-6-(D-ribitylamino)uracil = 6,7-dimethyl-8-(1-D-ribityl)lumazine + phosphate + 2 H2O + H(+). It participates in cofactor biosynthesis; riboflavin biosynthesis; riboflavin from 2-hydroxy-3-oxobutyl phosphate and 5-amino-6-(D-ribitylamino)uracil: step 1/2. In terms of biological role, catalyzes the formation of 6,7-dimethyl-8-ribityllumazine by condensation of 5-amino-6-(D-ribitylamino)uracil with 3,4-dihydroxy-2-butanone 4-phosphate. This is the penultimate step in the biosynthesis of riboflavin. The sequence is that of 6,7-dimethyl-8-ribityllumazine synthase from Prochlorococcus marinus (strain NATL2A).